Consider the following 433-residue polypeptide: Malate synthase (433 aa).

16–17 (TS) lines the acetyl-CoA pocket. Asp-52 contacts Mg(2+). Arg-84 is a binding site for acetyl-CoA. Glyoxylate-binding positions include Arg-84, Glu-158, and 191–192 (VD). Residues Glu-158 and Asp-192 each coordinate Mg(2+). Arg-236 and Leu-259 together coordinate acetyl-CoA. Asp-388 (proton acceptor) is an active-site residue.

The protein belongs to the HpcH/HpaI aldolase family. In terms of assembly, homotrimer and homohexamer in equilibrium. The cofactor is Mg(2+).

The protein localises to the cytoplasm. It carries out the reaction glyoxylate + acetyl-CoA + H2O = (S)-malate + CoA + H(+). It participates in carbohydrate metabolism; glyoxylate cycle; (S)-malate from isocitrate: step 2/2. Involved in the glyoxylate cycle which synthesizes precursors for carbohydrates from C2 compounds such as acetate. Catalyzes the Claisen condensation between acetyl-coenzyme A (acetyl-CoA) and glyoxylate to form the malyl-CoA intermediate that is subsequently hydrolyzed to produce malate and CoA. This is Malate synthase (aceB) from Haloferax volcanii (strain ATCC 29605 / DSM 3757 / JCM 8879 / NBRC 14742 / NCIMB 2012 / VKM B-1768 / DS2) (Halobacterium volcanii).